The sequence spans 105 residues: Pyruvate synthase subunit PorD (105 aa).

4Fe-4S ferredoxin-type domains lie at 44–73 (FKPE…LDEE) and 74–103 (GYPV…MVRE). The [4Fe-4S] cluster site is built by Cys-53, Cys-56, Cys-59, Cys-63, Cys-83, Cys-86, Cys-89, and Cys-93.

As to quaternary structure, heterotetramer of one alpha, one beta, one delta and one gamma chain. [4Fe-4S] cluster serves as cofactor.

The protein is Pyruvate synthase subunit PorD (porD) of Pyrococcus furiosus (strain ATCC 43587 / DSM 3638 / JCM 8422 / Vc1).